An 87-amino-acid chain; its full sequence is Acylphosphatase (87 aa).

In terms of domain architecture, Acylphosphatase-like spans 2–87 (RLTALVSGHV…ETGLREFHIY (86 aa)). Active-site residues include R17 and N35.

This sequence belongs to the acylphosphatase family.

The catalysed reaction is an acyl phosphate + H2O = a carboxylate + phosphate + H(+). This is Acylphosphatase (acyP) from Deinococcus radiodurans (strain ATCC 13939 / DSM 20539 / JCM 16871 / CCUG 27074 / LMG 4051 / NBRC 15346 / NCIMB 9279 / VKM B-1422 / R1).